A 110-amino-acid chain; its full sequence is MGYSGKPHHQLDGEIRESTDGKKWVIAGIPSRSPLKQINLSPGVTVTETEEQDQCPTTPTAVSVRIPRVPPCPAAPKKRKPSLKCSYVTVTRDYFSPPDLETVFIQRASY.

As to quaternary structure, interacts with CDKA-1 and D-type cyclins. In terms of tissue distribution, expressed in the root vascular tissue.

In terms of biological role, probable cyclin-dependent protein kinase (CDK) inhibitor that functions as a repressor of mitosis in the endoreduplication cell cycle. The polypeptide is Cyclin-dependent protein kinase inhibitor SMR8 (Arabidopsis thaliana (Mouse-ear cress)).